A 208-amino-acid chain; its full sequence is Small ribosomal subunit protein uS4 (208 aa).

The segment at 31-50 is disordered; that stretch reads SALDKRAYGPGQHGQRRTKT. An S4 RNA-binding domain is found at 98–161; that stretch reads RRLDNVVYRM…KSNPQVVRAM (64 aa).

This sequence belongs to the universal ribosomal protein uS4 family. Part of the 30S ribosomal subunit. Contacts protein S5. The interaction surface between S4 and S5 is involved in control of translational fidelity.

One of the primary rRNA binding proteins, it binds directly to 16S rRNA where it nucleates assembly of the body of the 30S subunit. Functionally, with S5 and S12 plays an important role in translational accuracy. This is Small ribosomal subunit protein uS4 from Helicobacter pylori (strain J99 / ATCC 700824) (Campylobacter pylori J99).